We begin with the raw amino-acid sequence, 122 residues long: Basic phospholipase A2 F15 (122 aa).

Intrachain disulfides connect Cys26–Cys115, Cys28–Cys44, Cys43–Cys95, Cys49–Cys122, Cys50–Cys88, Cys57–Cys81, and Cys75–Cys86. Ca(2+)-binding residues include Tyr27, Gly29, and Gly31. His47 is a catalytic residue. Asp48 serves as a coordination point for Ca(2+). Asp89 is an active-site residue.

It belongs to the phospholipase A2 family. Group II subfamily. D49 sub-subfamily. As to quaternary structure, when this protein is associated with crotapotin (F5 or F7), it forms the crotoxin protein. Ca(2+) serves as cofactor. In terms of tissue distribution, expressed by the venom gland.

The protein localises to the secreted. The enzyme catalyses a 1,2-diacyl-sn-glycero-3-phosphocholine + H2O = a 1-acyl-sn-glycero-3-phosphocholine + a fatty acid + H(+). Its activity is regulated as follows. Activated by heparin. Inhibited by its chaperone crotapotin. Functionally, snake venom phospholipase A2 (PLA2) that shows moderate neurotoxic activity in isolated mouse phrenic nerve diaphragm but shows high neurotoxic activity in a chick biventer cervis preparation. Also shows a high bactericidal effect against both Gram-negative and Gram-positive bacteria. PLA2 catalyzes the calcium-dependent hydrolysis of the 2-acyl groups in 3-sn-phosphoglycerides. This Crotalus durissus terrificus (South American rattlesnake) protein is Basic phospholipase A2 F15.